A 154-amino-acid polypeptide reads, in one-letter code: Lipoprotein signal peptidase (154 aa).

2 helical membrane-spanning segments follow: residues glycine 55 to methionine 75 and leucine 84 to valine 104. Catalysis depends on residues aspartate 111 and aspartate 129. The chain crosses the membrane as a helical span at residues isoleucine 124–phenylalanine 144.

It belongs to the peptidase A8 family.

The protein localises to the cell membrane. It catalyses the reaction Release of signal peptides from bacterial membrane prolipoproteins. Hydrolyzes -Xaa-Yaa-Zaa-|-(S,diacylglyceryl)Cys-, in which Xaa is hydrophobic (preferably Leu), and Yaa (Ala or Ser) and Zaa (Gly or Ala) have small, neutral side chains.. It functions in the pathway protein modification; lipoprotein biosynthesis (signal peptide cleavage). Functionally, this protein specifically catalyzes the removal of signal peptides from prolipoproteins. In Listeria welshimeri serovar 6b (strain ATCC 35897 / DSM 20650 / CCUG 15529 / CIP 8149 / NCTC 11857 / SLCC 5334 / V8), this protein is Lipoprotein signal peptidase.